A 578-amino-acid chain; its full sequence is Potassium-transporting ATPase potassium-binding subunit (578 aa).

The next 11 membrane-spanning stretches (helical) occupy residues Ala-3–Leu-23, Ala-67–Leu-87, Pro-95–Thr-115, Ala-136–Val-156, Leu-181–Thr-201, Leu-264–Val-284, Trp-291–Ala-311, Gly-396–Gly-416, Leu-436–Pro-456, Val-504–Phe-524, and Leu-543–Ala-563.

This sequence belongs to the KdpA family. In terms of assembly, the system is composed of three essential subunits: KdpA, KdpB and KdpC.

The protein localises to the cell inner membrane. Functionally, part of the high-affinity ATP-driven potassium transport (or Kdp) system, which catalyzes the hydrolysis of ATP coupled with the electrogenic transport of potassium into the cytoplasm. This subunit binds the periplasmic potassium ions and delivers the ions to the membrane domain of KdpB through an intramembrane tunnel. This Anaeromyxobacter dehalogenans (strain 2CP-C) protein is Potassium-transporting ATPase potassium-binding subunit.